The sequence spans 340 residues: Tetraacyldisaccharide 4'-kinase (340 aa).

47-54 (SVGGTGKT) serves as a coordination point for ATP.

It belongs to the LpxK family.

The catalysed reaction is a lipid A disaccharide + ATP = a lipid IVA + ADP + H(+). It functions in the pathway glycolipid biosynthesis; lipid IV(A) biosynthesis; lipid IV(A) from (3R)-3-hydroxytetradecanoyl-[acyl-carrier-protein] and UDP-N-acetyl-alpha-D-glucosamine: step 6/6. Functionally, transfers the gamma-phosphate of ATP to the 4'-position of a tetraacyldisaccharide 1-phosphate intermediate (termed DS-1-P) to form tetraacyldisaccharide 1,4'-bis-phosphate (lipid IVA). The protein is Tetraacyldisaccharide 4'-kinase of Flavobacterium johnsoniae (strain ATCC 17061 / DSM 2064 / JCM 8514 / BCRC 14874 / CCUG 350202 / NBRC 14942 / NCIMB 11054 / UW101) (Cytophaga johnsonae).